We begin with the raw amino-acid sequence, 146 residues long: Anti-sigma F factor (146 aa).

Belongs to the anti-sigma-factor family.

It carries out the reaction L-seryl-[protein] + ATP = O-phospho-L-seryl-[protein] + ADP + H(+). It catalyses the reaction L-threonyl-[protein] + ATP = O-phospho-L-threonyl-[protein] + ADP + H(+). Its function is as follows. Binds to sigma F and blocks its ability to form an RNA polymerase holoenzyme (E-sigma F). Phosphorylates SpoIIAA on a serine residue. This phosphorylation may enable SpoIIAA to act as an anti-anti-sigma factor that counteracts SpoIIAB and thus releases sigma F from inhibition. In Oceanobacillus iheyensis (strain DSM 14371 / CIP 107618 / JCM 11309 / KCTC 3954 / HTE831), this protein is Anti-sigma F factor.